We begin with the raw amino-acid sequence, 392 residues long: Speckle-type POZ protein-like (392 aa).

The MATH domain occupies 31-161 (KFSYMWTINN…DDKLTLYCEV (131 aa)). Positions 200–267 (TDCSLFVEGK…IYTGGTPHVD (68 aa)) constitute a BTB domain.

It belongs to the Tdpoz family. Homodimer. Heterodimer with SPOP. Component of cullin-RING-based BCR (BTB-CUL3-RBX1) E3 ubiquitin-protein ligase complexes containing homodimeric SPOPL or the heterodimer formed by SPOP and SPOPL.

It is found in the nucleus. Its pathway is protein modification; protein ubiquitination. In terms of biological role, component of a cullin-RING-based BCR (BTB-CUL3-RBX1) E3 ubiquitin-protein ligase complex that mediates the ubiquitination and subsequent proteasomal degradation of target proteins, but with relatively low efficiency. This Xenopus laevis (African clawed frog) protein is Speckle-type POZ protein-like (spopl).